We begin with the raw amino-acid sequence, 263 residues long: (R)-S-adenosyl-L-methionine hydrolase (263 aa).

Adenosine-binding residues include D18, D82, and N181. N181, Y221, S234, E239, and M244 together coordinate (R)-S-adenosyl-L-methionine.

It belongs to the SAM hydrolase / SAM-dependent halogenase family. In terms of assembly, homotrimer.

It catalyses the reaction (R)-S-adenosyl-L-methionine + H2O = adenosine + L-methionine + H(+). In terms of biological role, catalyzes the hydrolysis of S-adenosyl-L-methionine (SAM) into adenosine and L-methionine. Does not have chlorinase or fluorinase activity. This is (R)-S-adenosyl-L-methionine hydrolase from Methanocaldococcus jannaschii (strain ATCC 43067 / DSM 2661 / JAL-1 / JCM 10045 / NBRC 100440) (Methanococcus jannaschii).